A 61-amino-acid polypeptide reads, in one-letter code: UPF0434 protein MS0934 (61 aa).

It belongs to the UPF0434 family.

The protein is UPF0434 protein MS0934 of Mannheimia succiniciproducens (strain KCTC 0769BP / MBEL55E).